The sequence spans 560 residues: Glutamate--tRNA ligase, chloroplastic/mitochondrial (560 aa).

L-glutamate is bound at residue 47–49 (RFA). The short motif at 50-60 (PSPTGNLHVGG) is the 'HIGH' region element. H57 serves as a coordination point for ATP. Residues E83, 235 to 239 (YNFCV), and R253 each bind L-glutamate. Residues E256 and 291–295 (KLSKR) contribute to the ATP site. The short motif at 291 to 295 (KLSKR) is the 'KMSKS' region element.

Belongs to the class-I aminoacyl-tRNA synthetase family. Glutamate--tRNA ligase type 1 subfamily.

It is found in the plastid. Its subcellular location is the chloroplast. The protein localises to the mitochondrion. It catalyses the reaction tRNA(Glu) + L-glutamate + ATP = L-glutamyl-tRNA(Glu) + AMP + diphosphate. Its function is as follows. Catalyzes the attachment of glutamate to tRNA(Glu) in a two-step reaction: glutamate is first activated by ATP to form Glu-AMP and then transferred to the acceptor end of tRNA(Glu). This is Glutamate--tRNA ligase, chloroplastic/mitochondrial from Hordeum vulgare (Barley).